Reading from the N-terminus, the 78-residue chain is Small ribosomal subunit protein bS18 (78 aa).

Belongs to the bacterial ribosomal protein bS18 family. As to quaternary structure, part of the 30S ribosomal subunit. Forms a tight heterodimer with protein bS6.

Binds as a heterodimer with protein bS6 to the central domain of the 16S rRNA, where it helps stabilize the platform of the 30S subunit. The sequence is that of Small ribosomal subunit protein bS18 from Geobacillus kaustophilus (strain HTA426).